We begin with the raw amino-acid sequence, 1758 residues long: RanBP2-like and GRIP domain-containing protein 4 (1758 aa).

A Phosphoserine modification is found at Ser21. TPR repeat units follow at residues 60 to 93 (PRAH…NPTQ) and 584 to 617 (QKMG…LKII). The disordered stretch occupies residues 761–805 (DPLYKNGSLRNADSEIKHSTPSPTKYSLSPSKSYKYSPKTPPRWA). Over residues 779–798 (STPSPTKYSLSPSKSYKYSP) the composition is skewed to low complexity. One can recognise a RanBD1 1 domain in the interval 1037 to 1173 (HFEPVVQMPE…FEECQQLLLD (137 aa)). Disordered regions lie at residues 1213–1249 (QTKV…TLEW) and 1295–1332 (SFKS…ERDG). Polar residues predominate over residues 1236–1245 (IKPNPENTGP). The span at 1295 to 1309 (SFKSALSPSKSPAKL) shows a compositional bias: low complexity. Residues 1318–1330 (TDEESDVTQEEER) show a composition bias toward acidic residues. Residues 1334–1470 (YFEPVVPLPD…FDEAKTAQEK (137 aa)) enclose the RanBD1 2 domain. Over residues 1583–1594 (SETSSVAQSGSE) the composition is skewed to polar residues. The interval 1583 to 1621 (SETSSVAQSGSESKVEPKKCELSKNSDIEQSSDSKVKNL) is disordered. The segment covering 1595–1618 (SKVEPKKCELSKNSDIEQSSDSKV) has biased composition (basic and acidic residues). Positions 1703-1753 (QEESAANVEHLKNVLLQFIFLKPGSERERLLPVINTMLQLSPEEKGKLAAV) constitute a GRIP domain.

This Homo sapiens (Human) protein is RanBP2-like and GRIP domain-containing protein 4 (RGPD4).